Consider the following 289-residue polypeptide: Aquaporin PIP1-2 (289 aa).

The segment at 1-36 (MEGKEEDVRLGANKFSERQPIGTAAQGAADDKDYKE) is disordered. Transmembrane regions (helical) follow at residues 58 to 78 (IAEF…VMGV) and 93 to 115 (IAWS…SGGH). The short motif at 117 to 119 (NPA) is the NPA 1 element. 3 consecutive transmembrane segments (helical) span residues 136 to 156 (LFYI…VKGF), 178 to 198 (GDGL…VFSA), and 212 to 232 (ILAP…TIPI). The NPA 2 motif lies at 238-240 (NPA). The chain crosses the membrane as a helical span at residues 260–280 (IFWVGPFIGAALAAIYHQVII).

This sequence belongs to the MIP/aquaporin (TC 1.A.8) family. PIP (TC 1.A.8.11) subfamily. In terms of assembly, interacts with PIP2-1 to form heteromers. Highly expressed in developing tassels and at lower levels in roots, shoots, ears and embryos. Expressed in the root growing zone at 5-6 mm from the root tip. Expressed in xylem parenchyma.

The protein resides in the cell membrane. Its function is as follows. Water channel required to facilitate the transport of water across cell membrane. Active as heteromers with PIP1-1, PIP2-1, PIP2-4 or PIP2-5, but not as homomers. The sequence is that of Aquaporin PIP1-2 (PIP1-2) from Zea mays (Maize).